Consider the following 408-residue polypeptide: Glutaryl-CoA dehydrogenase, mitochondrial (408 aa).

Residues 1–13 constitute a mitochondrion transit peptide; the sequence is KGGKTQGRSAKSS. Substrate contacts are provided by residues 107 to 108 and serine 156; that span reads RS. Residues 147 to 156, serine 156, and 182 to 184 each bind FAD; these read FGLTEPNHGS and WIT. Lysine 210 bears the N6-acetyllysine mark. 257 to 264 contacts substrate; it reads FGCLNNAR. Residues arginine 289, glutamine 300, and 357 to 361 contribute to the FAD site; that span reads DMLGG. The active-site Proton acceptor is the glutamate 384. Glycine 385 contributes to the substrate binding site. Residues threonine 386, 386 to 388, and phenylalanine 404 contribute to the FAD site; that span reads THD.

This sequence belongs to the acyl-CoA dehydrogenase family. Homotetramer. FAD is required as a cofactor.

It localises to the mitochondrion matrix. It carries out the reaction glutaryl-CoA + oxidized [electron-transfer flavoprotein] + 2 H(+) = (2E)-butenoyl-CoA + reduced [electron-transfer flavoprotein] + CO2. It functions in the pathway amino-acid metabolism; lysine degradation. Its pathway is amino-acid metabolism; tryptophan metabolism. Its function is as follows. Catalyzes the oxidative decarboxylation of glutaryl-CoA to crotonyl-CoA and CO(2) in the degradative pathway of L-lysine, L-hydroxylysine, and L-tryptophan metabolism. It uses electron transfer flavoprotein as its electron acceptor. This is Glutaryl-CoA dehydrogenase, mitochondrial (GCDH) from Sus scrofa (Pig).